A 339-amino-acid chain; its full sequence is Lipopolysaccharide glucosyltransferase WaaO (339 aa).

Residues 34–39 (GTDKNF) and 131–132 (DA) contribute to the UDP site. Asp-131 and Asp-133 together coordinate Mg(2+). Short sequence motifs (DXD) lie at residues 131 to 133 (DAD) and 220 to 222 (DQD). Residue His-265 participates in Mg(2+) binding. Residue 265-271 (HYIGPTK) participates in UDP binding.

Belongs to the glycosyltransferase 8 family. The cofactor is Mg(2+).

The enzyme catalyses UDP-glucose + lipopolysaccharide = UDP + alpha-D-glucosyl-lipopolysaccharide.. It carries out the reaction alpha-D-Gal-(1-&gt;6)-alpha-D-Glc-(1-&gt;3)-[L-alpha-D-Hep-(1-&gt;7)]-4-O-PO3(2-)-L-alpha-D-Hep-(1-&gt;3)-4-O-PO3(2-)-L-alpha-D-Hep-(1-&gt;5)-[alpha-Kdo-(2-&gt;4)]-alpha-Kdo-(2-&gt;6)-lipid A + UDP-alpha-D-glucose = alpha-D-Glc-(1-&gt;3)-[alpha-D-Gal-(1-&gt;6)]-alpha-D-Glc-(1-&gt;3)-[L-alpha-D-Hep-(1-&gt;7)]-4-O-PO3(2-)-L-alpha-D-Hep-(1-&gt;3)-4-O-PO3(2-)-L-alpha-D-Hep-(1-&gt;5)-[alpha-Kdo-(2-&gt;4)]-alpha-Kdo-(2-&gt;6)-lipid A + UDP + H(+). It participates in bacterial outer membrane biogenesis; LPS core biosynthesis. Functionally, glucosyltransferase involved in the biosynthesis of the core oligosaccharide region of lipopolysaccharide (LPS). Catalyzes the addition of a second glucose (glucose II) to the first outer-core glucose (glucose I). In vitro, can add multiple glucose residues to its lipid acceptor. Activity does not require the branched galactose added by WaaB, but it is higher in the presence of this branched galactose. In the absence of a lipid acceptor, can hydrolyze UDP-glucose, but not UDP-galactose. In Escherichia coli (strain K12), this protein is Lipopolysaccharide glucosyltransferase WaaO.